Here is a 153-residue protein sequence, read N- to C-terminus: Methylglyoxal synthase (153 aa).

The region spanning 6–153 (RTIAARKHIA…QRYLAERLPS (148 aa)) is the MGS-like domain. Residues His19, Lys23, 45–48 (TGTT), and 65–66 (SG) contribute to the substrate site. The active-site Proton donor/acceptor is the Asp71. A substrate-binding site is contributed by His98.

It belongs to the methylglyoxal synthase family.

It catalyses the reaction dihydroxyacetone phosphate = methylglyoxal + phosphate. Functionally, catalyzes the formation of methylglyoxal from dihydroxyacetone phosphate. This Sodalis glossinidius (strain morsitans) protein is Methylglyoxal synthase.